Reading from the N-terminus, the 797-residue chain is Ent-atiserene synthase KSL1, chloroplastic (797 aa).

The transit peptide at 1–48 (LVKDDMSLILSSFSLFRSSRSSPASASLAGSGHPRTTPPKIASLQSPM) directs the protein to the chloroplast. Low complexity predominate over residues 21–32 (SSPASASLAGSG). Residues 21–47 (SSPASASLAGSGHPRTTPPKIASLQSP) are disordered. Residues D547, D551, N691, and E699 each contribute to the Mg(2+) site. A DDXXD motif motif is present at residues 547–551 (DDLFD).

It belongs to the terpene synthase family. Mg(2+) is required as a cofactor.

It is found in the plastid. It localises to the chloroplast. The enzyme catalyses ent-copalyl diphosphate = ent-atiserene + diphosphate. Its pathway is secondary metabolite biosynthesis; terpenoid biosynthesis. Functionally, involved in the biosynthesis of ent-kaurene diterpenoids natural products such as oridonin, miltiradiene, eriocalyxin B and nezukol, known to exhibit antitumor, anti-inflammatory and antibacterial activities. Catalyzes the conversion of ent-copalyl diphosphate (ent-CPP) to ent-atiserene. The protein is Ent-atiserene synthase KSL1, chloroplastic of Isodon japonicus (Scutellaria japonica).